A 717-amino-acid polypeptide reads, in one-letter code: Ribosomal RNA large subunit methyltransferase K/L (717 aa).

The region spanning 43 to 154 (IGYKACLWSR…KGKANITLDL (112 aa)) is the THUMP domain.

Belongs to the methyltransferase superfamily. RlmKL family.

The protein localises to the cytoplasm. The catalysed reaction is guanosine(2445) in 23S rRNA + S-adenosyl-L-methionine = N(2)-methylguanosine(2445) in 23S rRNA + S-adenosyl-L-homocysteine + H(+). It carries out the reaction guanosine(2069) in 23S rRNA + S-adenosyl-L-methionine = N(2)-methylguanosine(2069) in 23S rRNA + S-adenosyl-L-homocysteine + H(+). In terms of biological role, specifically methylates the guanine in position 2445 (m2G2445) and the guanine in position 2069 (m7G2069) of 23S rRNA. The polypeptide is Ribosomal RNA large subunit methyltransferase K/L (Aeromonas hydrophila subsp. hydrophila (strain ATCC 7966 / DSM 30187 / BCRC 13018 / CCUG 14551 / JCM 1027 / KCTC 2358 / NCIMB 9240 / NCTC 8049)).